A 253-amino-acid chain; its full sequence is Probable transcriptional regulatory protein Krad_3057 (253 aa).

It belongs to the TACO1 family.

It is found in the cytoplasm. The polypeptide is Probable transcriptional regulatory protein Krad_3057 (Kineococcus radiotolerans (strain ATCC BAA-149 / DSM 14245 / SRS30216)).